Here is a 657-residue protein sequence, read N- to C-terminus: Threonine--tRNA ligase (657 aa).

The TGS domain occupies 1-62; it reads MALDITFPDG…AHSGQLQIMT (62 aa). The tract at residues 240-538 is catalytic; the sequence is DHRVIGRDLD…LTEIYKGAFP (299 aa). C334, H385, and H515 together coordinate Zn(2+).

This sequence belongs to the class-II aminoacyl-tRNA synthetase family. Homodimer. The cofactor is Zn(2+).

It is found in the cytoplasm. The catalysed reaction is tRNA(Thr) + L-threonine + ATP = L-threonyl-tRNA(Thr) + AMP + diphosphate + H(+). In terms of biological role, catalyzes the attachment of threonine to tRNA(Thr) in a two-step reaction: L-threonine is first activated by ATP to form Thr-AMP and then transferred to the acceptor end of tRNA(Thr). Also edits incorrectly charged L-seryl-tRNA(Thr). This chain is Threonine--tRNA ligase, found in Lacticaseibacillus paracasei (strain ATCC 334 / BCRC 17002 / CCUG 31169 / CIP 107868 / KCTC 3260 / NRRL B-441) (Lactobacillus paracasei).